A 211-amino-acid chain; its full sequence is Pyridoxine/pyridoxamine 5'-phosphate oxidase (211 aa).

Substrate-binding positions include 7–10 (RREY) and Lys-65. Residues 60–65 (RIVLLK), 75–76 (YT), Arg-81, Lys-82, and Gln-104 each bind FMN. Residues Tyr-122, Arg-126, and Ser-130 each contribute to the substrate site. FMN-binding positions include 139–140 (QS) and Trp-184. 190 to 192 (RLH) serves as a coordination point for substrate. Arg-194 serves as a coordination point for FMN.

This sequence belongs to the pyridoxamine 5'-phosphate oxidase family. Homodimer. FMN serves as cofactor.

The enzyme catalyses pyridoxamine 5'-phosphate + O2 + H2O = pyridoxal 5'-phosphate + H2O2 + NH4(+). The catalysed reaction is pyridoxine 5'-phosphate + O2 = pyridoxal 5'-phosphate + H2O2. The protein operates within cofactor metabolism; pyridoxal 5'-phosphate salvage; pyridoxal 5'-phosphate from pyridoxamine 5'-phosphate: step 1/1. Its pathway is cofactor metabolism; pyridoxal 5'-phosphate salvage; pyridoxal 5'-phosphate from pyridoxine 5'-phosphate: step 1/1. Its function is as follows. Catalyzes the oxidation of either pyridoxine 5'-phosphate (PNP) or pyridoxamine 5'-phosphate (PMP) into pyridoxal 5'-phosphate (PLP). The sequence is that of Pyridoxine/pyridoxamine 5'-phosphate oxidase from Photobacterium profundum (strain SS9).